The primary structure comprises 354 residues: Protein RecA (354 aa).

Residue 67–74 participates in ATP binding; it reads GPESSGKT.

The protein belongs to the RecA family.

It is found in the cytoplasm. In terms of biological role, can catalyze the hydrolysis of ATP in the presence of single-stranded DNA, the ATP-dependent uptake of single-stranded DNA by duplex DNA, and the ATP-dependent hybridization of homologous single-stranded DNAs. It interacts with LexA causing its activation and leading to its autocatalytic cleavage. In Pasteurella multocida (strain Pm70), this protein is Protein RecA.